The primary structure comprises 87 residues: FXYD domain-containing ion transport regulator 3 (87 aa).

The first 20 residues, 1 to 20 (MQKVTLGLLVFLAGFPVLDA), serve as a signal peptide directing secretion. At 21 to 38 (NDLEDKNSPFYYDWHSLQ) the chain is on the extracellular side. A helical transmembrane segment spans residues 39 to 59 (VGGLICAGVLCAMGIIIVMSA). The Cytoplasmic portion of the chain corresponds to 60–87 (KCKCKFGQKSGHHPGETPPLITPGSAQS). The tract at residues 66–87 (GQKSGHHPGETPPLITPGSAQS) is disordered.

The protein belongs to the FXYD family. As to quaternary structure, regulatory subunit of the sodium/potassium-transporting ATPase which is composed of a catalytic alpha subunit, a non-catalytic beta subunit and an additional regulatory subunit. Interacts with catalytic alpha subunit ATP1A1. Also interacts with non-catalytic beta subunit ATP1B1. Interacts with the ATP1A1-ATP1B1, ATP1A2-ATP1B1 and ATP1A3-ATP1B1 NKA isozymes. Glutathionylated. Isoform 1: Expressed mainly in differentiated cells (at protein level). Isoform 2: Expressed mainly in undifferentiated cells (at protein level).

The protein resides in the cell membrane. Its function is as follows. Associates with and regulates the activity of the sodium/potassium-transporting ATPase (NKA) which transports Na(+) out of the cell and K(+) into the cell. Reduces glutathionylation of the NKA beta-1 subunit ATP1B1, thus reversing glutathionylation-mediated inhibition of ATP1B1. Induces a hyperpolarization-activated chloride current when expressed in Xenopus oocytes. Functionally, decreases the apparent K+ and Na+ affinity of the sodium/potassium-transporting ATPase over a large range of membrane potentials. Decreases the apparent K+ affinity of the sodium/potassium-transporting ATPase only at slightly negative and positive membrane potentials and increases the apparent Na+ affinity over a large range of membrane potentials. The sequence is that of FXYD domain-containing ion transport regulator 3 (FXYD3) from Homo sapiens (Human).